Reading from the N-terminus, the 159-residue chain is MAKEPTEAAHPQPEQTKTNHKAHRPVGGYVLAKDPIEINQGRPRTTLTVRNTGDRPIQIGSHFHFFEVNRYLEFDRSKAFGLRLDIPANTAVRFEPGDEKEVTLVPFAGKRFIFGFNNLVDGWSGDGPTPDYQPNREIAAERAEKLGFKSCKSGGKDAK.

Residues 1-23 (MAKEPTEAAHPQPEQTKTNHKAH) form a disordered region.

This sequence belongs to the urease beta subunit family. In terms of assembly, heterotrimer of UreA (gamma), UreB (beta) and UreC (alpha) subunits. Three heterotrimers associate to form the active enzyme.

The protein resides in the cytoplasm. The enzyme catalyses urea + 2 H2O + H(+) = hydrogencarbonate + 2 NH4(+). It participates in nitrogen metabolism; urea degradation; CO(2) and NH(3) from urea (urease route): step 1/1. This is Urease subunit beta 2 from Brucella abortus biovar 1 (strain 9-941).